Reading from the N-terminus, the 437-residue chain is Cytochrome b (437 aa).

The helical transmembrane segment at 45–65 (WIWGIVLAFTLVLQIVTGIVL) threads the bilayer. Residues H97 and H111 each contribute to the heme b site. Transmembrane regions (helical) follow at residues 100-120 (GASL…YYGS), 129-149 (WIVG…GYVL), 156-176 (FWGA…GPSI), 194-214 (FFSL…IHIW), 248-268 (FVIK…AVVA), 298-318 (FLPF…VILV), 330-350 (FFGV…PWLD), 365-385 (MWFW…AMPT), and 391-411 (WISL…LPLL). Residues H198 and H212 each contribute to the heme b site.

It belongs to the cytochrome b family. As to quaternary structure, the main subunits of complex b-c1 are: cytochrome b, cytochrome c1 and the Rieske protein. Heme b is required as a cofactor.

It is found in the cell membrane. Its function is as follows. Component of the ubiquinol-cytochrome c reductase complex (complex III or cytochrome b-c1 complex), which is a respiratory chain that generates an electrochemical potential coupled to ATP synthesis. In Rhodobacter capsulatus (Rhodopseudomonas capsulata), this protein is Cytochrome b (petB).